The following is a 768-amino-acid chain: Protein STRUBBELIG (768 aa).

An N-terminal signal peptide occupies residues 1 to 24 (MSFTRWEVFFGLSVLALTMPFSAG). Residues 25–341 (VTNLRDVSAI…GSGKFWSTQR (317 aa)) are Extracellular-facing. The cysteines at positions 57 and 66 are disulfide-linked. N-linked (GlcNAc...) asparagine glycosylation occurs at N70. LRR repeat units lie at residues 94–115 (SIQV…ALPS), 116–139 (SIRN…SFLS), 140–162 (DLSE…FQQL), 164–186 (KLTK…MGDL), 188–210 (SLKI…EDLF), and 211–231 (LTDL…NLLK). N119 carries N-linked (GlcNAc...) asparagine glycosylation. The tract at residues 241-334 (PFNTSIITPP…ISPPSGSGSG (94 aa)) is disordered. An N-linked (GlcNAc...) asparagine glycan is attached at N243. Composition is skewed to pro residues over residues 248-283 (TPPP…PFAP) and 291-301 (QHPPPSPPLVW). The span at 315–334 (NSVSGQPTLQISPPSGSGSG) shows a compositional bias: polar residues. The helical transmembrane segment at 342-362 (IILVVSSVAIIVLVSGLCVTL) threads the bilayer. The Cytoplasmic segment spans residues 363–768 (WRCCRSKIYN…EIVQDLQHMI (406 aa)). A disordered region spans residues 385–477 (PYFNKPPSQP…RAAHFPPGLN (93 aa)). The segment covering 439–464 (SYYNKDVNTPQKPLQQPPRQFQSNDT) has biased composition (polar residues). The 272-residue stretch at 497–768 (FSEENIIGEG…EIVQDLQHMI (272 aa)) folds into the Protein kinase domain. ATP is bound by residues 503 to 511 (IGEGSIGNV) and K525.

The protein belongs to the protein kinase superfamily. Ser/Thr protein kinase family. In terms of assembly, interacts (via intra-cellular domain) with AN; this interaction is not required for correct subcellular localization and recycling of SUB. Binds to QKY and POQ at the plasma membrane. Binds to QKY at plasmodesmata (PD) in root epidermal cells to promote tissue morphogenesis. Expressed in leaves, stems, inflorescences, flower buds and developing root epidermis.

It is found in the cell membrane. The protein resides in the cell junction. The protein localises to the plasmodesma. Regulated at the post-transcriptional level. Its function is as follows. Regulates the expression of transcription factors that define the cell fates. Acts in a non-cell-autonomous fashion, functions in a radial inside-out signaling process, and mediates cell morphogenesis and cell fate across clonally distinct cell layers in floral primordia, developing ovules, and root meristems. Seems to be required for the regulation of cell shape and the orientation of the mitotic division plane. Involved in root hair specification, in the formation of the outer integument and the shape of organs such as carpels and petals and is necessary for the shape and height of the stem. Non-functional SUB proteins are retained in the endoplasmic reticulum and degraded by endoplasmic reticulum-associated degradation (ERAD). Collaboratively with QKY and POQ, regulates cell growth anisotropy during gynoecium development, thus linking together cell-cell communication and cellular growth. Together with QKY, links RLK-dependent signal transduction and intercellular communication mediated by plasmodesmata (PD) to regulate tissue morphogenesis. The polypeptide is Protein STRUBBELIG (Arabidopsis thaliana (Mouse-ear cress)).